The following is a 501-amino-acid chain: Myrosinase MA1 (501 aa).

3 disulfides stabilise this stretch: Cys-6–Cys-438, Cys-14–Cys-434, and Cys-206–Cys-214. A glycan (N-linked (GlcNAc...) asparagine) is linked at Asn-21. Position 39 (Gln-39) interacts with substrate. His-56 provides a ligand contact to Zn(2+). Asn-60 is a glycosylation site (N-linked (GlcNAc...) asparagine). Position 70 (Asp-70) interacts with Zn(2+). An N-linked (GlcNAc...) asparagine glycan is attached at Asn-90. Substrate contacts are provided by His-141 and Asn-186. Gln-187 provides a ligand contact to L-ascorbate. Residues Asn-218 and Asn-244 are each glycosylated (N-linked (GlcNAc...) asparagine). Arg-259 is a binding site for L-ascorbate. Residues Asn-265 and Asn-292 are each glycosylated (N-linked (GlcNAc...) asparagine). A substrate-binding site is contributed by Tyr-330. 3 N-linked (GlcNAc...) asparagine glycosylation sites follow: Asn-343, Asn-346, and Asn-361. Glu-409 serves as the catalytic Nucleophile. Substrate is bound by residues Trp-457 and Glu-464 to Phe-465. Asn-482 carries N-linked (GlcNAc...) asparagine glycosylation.

This sequence belongs to the glycosyl hydrolase 1 family. As to quaternary structure, homodimer. As to expression, in vacuoles called myrosin grains of a certain class of cells, myrosin cells, distributed in the cotyledons and the axis of the embryo as well as in different organs of the growing plant.

It localises to the vacuole. It carries out the reaction a thioglucoside + H2O = a sugar + a thiol.. Its function is as follows. Degradation of glucosinolates (glucose residue linked by a thioglucoside bound to an amino acid derivative) to glucose, sulfate and any of the products: thiocyanates, isothiocyanates, nitriles, epithionitriles or oxazolidine-2-thiones. The protein is Myrosinase MA1 of Sinapis alba (White mustard).